The sequence spans 253 residues: Troponin T, fast skeletal muscle isoforms (253 aa).

Positions 1–25 (MSDTEEVEHGEEEYEEEEEVQEEEV) are enriched in acidic residues. Disordered regions lie at residues 1 to 58 (MSDT…DIQK) and 97 to 178 (RAER…VLAE). S2 is modified (N-acetylserine). Basic and acidic residues-rich tracts occupy residues 46-58 (PEGE…DIQK), 97-139 (RAER…DDLK), and 167-178 (TARETKKKVLAE).

It belongs to the troponin T family.

Troponin T is the tropomyosin-binding subunit of troponin, the thin filament regulatory complex which confers calcium-sensitivity to striated muscle actomyosin ATPase activity. The sequence is that of Troponin T, fast skeletal muscle isoforms (TNNT3) from Coturnix japonica (Japanese quail).